Consider the following 114-residue polypeptide: Putative pterin-4-alpha-carbinolamine dehydratase (114 aa).

It belongs to the pterin-4-alpha-carbinolamine dehydratase family.

It catalyses the reaction (4aS,6R)-4a-hydroxy-L-erythro-5,6,7,8-tetrahydrobiopterin = (6R)-L-erythro-6,7-dihydrobiopterin + H2O. This chain is Putative pterin-4-alpha-carbinolamine dehydratase, found in Chlorobium luteolum (strain DSM 273 / BCRC 81028 / 2530) (Pelodictyon luteolum).